The sequence spans 398 residues: MAKDKFERTKPHVNVGTIGHIDHGKTTTTGAILAVQAAKGLAKAKGYSDIAKGGTVRDATKTVTIAVAHVEYESENRHYAHIDCPGHADFVKNMITGAAQMDGAILVVSAADGPMPQTKEHVLLGRQVGVPYIVVYLNKCDLVDDEELLELVELEVRELLSKYDYPGDDVPVVRGSSLPAYNNPSDPEASKCITELMEALDSHIPEPTREDDKPFLMAIEDVFSIEGRGTVATGRIERGVVKVGEEVEIIGLGPNSTKTTCTGVEMFRKEMNEGRSGDNVGCLLRGVKREDIQRGQVLAKPGSITPHTKFEAEVYCLSKDEGGRHTPFFSGYRPQFYFRTTDVTGTANLVGADMCMPGDNVKVEVELHKPIAMDDGVRFAIREGGRTVGSGVVTKILE.

In terms of domain architecture, tr-type G spans 10–208; it reads KPHVNVGTIG…ALDSHIPEPT (199 aa). A G1 region spans residues 19 to 26; that stretch reads GHIDHGKT. Position 19–26 (19–26) interacts with GTP; sequence GHIDHGKT. T26 is a binding site for Mg(2+). Residues 60-64 form a G2 region; the sequence is TKTVT. The tract at residues 83–86 is G3; the sequence is DCPG. GTP-binding positions include 83-87 and 138-141; these read DCPGH and NKCD. Residues 138–141 are G4; it reads NKCD. Residues 176–178 are G5; sequence SSL.

It belongs to the TRAFAC class translation factor GTPase superfamily. Classic translation factor GTPase family. EF-Tu/EF-1A subfamily. As to quaternary structure, monomer.

The protein resides in the cytoplasm. The enzyme catalyses GTP + H2O = GDP + phosphate + H(+). Functionally, GTP hydrolase that promotes the GTP-dependent binding of aminoacyl-tRNA to the A-site of ribosomes during protein biosynthesis. This is Elongation factor Tu from Rhodopirellula baltica (strain DSM 10527 / NCIMB 13988 / SH1).